Consider the following 336-residue polypeptide: HTH-type transcriptional regulator SyrM (336 aa).

Residues 41 to 98 (IDLNLLVALEALLEYRNVTHAGQHIGRSQPAMSRALGRLRGLFNDDLLVRSSTGLIPT) form the HTH lysR-type domain. A DNA-binding region (H-T-H motif) is located at residues 58 to 77 (VTHAGQHIGRSQPAMSRALG).

This sequence belongs to the LysR transcriptional regulatory family.

In terms of biological role, acts in trans to stimulate nod gene expression via nodD3 and exo gene expression via SyrA. This Rhizobium etli protein is HTH-type transcriptional regulator SyrM (syrM).